A 987-amino-acid chain; its full sequence is Mediator of RNA polymerase II transcription subunit 24 (987 aa).

6 consecutive short sequence motifs (LXXLL motif) follow at residues 128 to 132 (LHWLL), 344 to 348 (LTPLL), 446 to 450 (LDLLL), 555 to 559 (LVALL), 786 to 790 (LPGLL), and 855 to 859 (LMRLL). Ser860 and Ser871 each carry phosphoserine.

The protein belongs to the Mediator complex subunit 24 family. Component of the Mediator complex, which is composed of MED1, MED4, MED6, MED7, MED8, MED9, MED10, MED11, MED12, MED13, MED13L, MED14, MED15, MED16, MED17, MED18, MED19, MED20, MED21, MED22, MED23, MED24, MED25, MED26, MED27, MED29, MED30, MED31, CCNC, CDK8 and CDC2L6/CDK11. The MED12, MED13, CCNC and CDK8 subunits form a distinct module termed the CDK8 module. Mediator containing the CDK8 module is less active than Mediator lacking this module in supporting transcriptional activation. Individual preparations of the Mediator complex lacking one or more distinct subunits have been variously termed ARC, CRSP, DRIP, PC2, SMCC and TRAP. Interacts with AR. Interacts with MED1 and MED10. As to expression, expressed in the adrenal gland, brain, epididymis, heart, kidney, liver, ovary, pancreas, prostate, skeletal muscle, small intestine, spleen, stomach, testis and thymus.

The protein resides in the nucleus. Its function is as follows. Component of the Mediator complex, a coactivator involved in the regulated transcription of nearly all RNA polymerase II-dependent genes. Mediator functions as a bridge to convey information from gene-specific regulatory proteins to the basal RNA polymerase II transcription machinery. Mediator is recruited to promoters by direct interactions with regulatory proteins and serves as a scaffold for the assembly of a functional preinitiation complex with RNA polymerase II and the general transcription factors. Required for basal and activator-dependent transcription. The chain is Mediator of RNA polymerase II transcription subunit 24 (Med24) from Mus musculus (Mouse).